We begin with the raw amino-acid sequence, 185 residues long: NAD(P)H-quinone oxidoreductase subunit J (185 aa).

The protein belongs to the complex I 30 kDa subunit family. NDH-1 can be composed of about 15 different subunits; different subcomplexes with different compositions have been identified which probably have different functions.

It localises to the cellular thylakoid membrane. The enzyme catalyses a plastoquinone + NADH + (n+1) H(+)(in) = a plastoquinol + NAD(+) + n H(+)(out). It carries out the reaction a plastoquinone + NADPH + (n+1) H(+)(in) = a plastoquinol + NADP(+) + n H(+)(out). Functionally, NDH-1 shuttles electrons from an unknown electron donor, via FMN and iron-sulfur (Fe-S) centers, to quinones in the respiratory and/or the photosynthetic chain. The immediate electron acceptor for the enzyme in this species is believed to be plastoquinone. Couples the redox reaction to proton translocation, and thus conserves the redox energy in a proton gradient. Cyanobacterial NDH-1 also plays a role in inorganic carbon-concentration. The sequence is that of NAD(P)H-quinone oxidoreductase subunit J from Prochlorococcus marinus (strain MIT 9303).